The chain runs to 257 residues: UPF0246 protein Ssed_1188 (257 aa).

It belongs to the UPF0246 family.

The chain is UPF0246 protein Ssed_1188 from Shewanella sediminis (strain HAW-EB3).